The sequence spans 238 residues: Peptidyl-tRNA hydrolase (238 aa).

Position 14 (Tyr14) interacts with tRNA. His19 functions as the Proton acceptor in the catalytic mechanism. 3 residues coordinate tRNA: Phe64, Asn66, and Asn112. The span at 190-202 shows a compositional bias: basic and acidic residues; the sequence is KTEEPAPKPEKKT. A disordered region spans residues 190-225; sequence KTEEPAPKPEKKTVAKSHIHQARNHNQPRMPESGPM. Over residues 203-212 the composition is skewed to basic residues; that stretch reads VAKSHIHQAR.

The protein belongs to the PTH family. In terms of assembly, monomer.

Its subcellular location is the cytoplasm. It catalyses the reaction an N-acyl-L-alpha-aminoacyl-tRNA + H2O = an N-acyl-L-amino acid + a tRNA + H(+). Functionally, hydrolyzes ribosome-free peptidyl-tRNAs (with 1 or more amino acids incorporated), which drop off the ribosome during protein synthesis, or as a result of ribosome stalling. Catalyzes the release of premature peptidyl moieties from peptidyl-tRNA molecules trapped in stalled 50S ribosomal subunits, and thus maintains levels of free tRNAs and 50S ribosomes. This is Peptidyl-tRNA hydrolase from Rhizobium rhizogenes (strain K84 / ATCC BAA-868) (Agrobacterium radiobacter).